A 130-amino-acid polypeptide reads, in one-letter code: Small ribosomal subunit protein uS8 (130 aa).

It belongs to the universal ribosomal protein uS8 family. As to quaternary structure, part of the 30S ribosomal subunit. Contacts proteins S5 and S12.

In terms of biological role, one of the primary rRNA binding proteins, it binds directly to 16S rRNA central domain where it helps coordinate assembly of the platform of the 30S subunit. The chain is Small ribosomal subunit protein uS8 from Pseudomonas fluorescens (strain ATCC BAA-477 / NRRL B-23932 / Pf-5).